We begin with the raw amino-acid sequence, 177 residues long: Phycocyanin PC645 beta subunit (177 aa).

Tyrosine 18 lines the mesobiliverdin pocket. (2R,3E)-phycocyanobilin contacts are provided by lysine 28, asparagine 35, and aspartate 39. Residues cysteine 50, aspartate 54, and cysteine 61 each coordinate 15,16-dihydrobiliverdin. (2R,3E)-phycocyanobilin-binding residues include asparagine 72, arginine 77, cysteine 82, arginine 84, and aspartate 85. Position 148 (glutamine 148) interacts with 15,16-dihydrobiliverdin. Residues proline 154, glycine 156, and cysteine 158 each contribute to the (2R,3E)-phycocyanobilin site.

Belongs to the phycobiliprotein family. In terms of assembly, heterotetramer of 2 different alpha chains and 2 identical beta chains which form 2 alpha-beta heterodimers within the heterotetramer. Post-translationally, contains two phycocyanobilin chromophores, one mesobiliverdin chromophore and one 15,16-dihydrobiliverdin chromophore with binding mediated by both the alpha and beta subunits.

It localises to the plastid. The protein resides in the chloroplast thylakoid membrane. In terms of biological role, light-harvesting photosynthetic tetrapyrrole chromophore-protein from the phycobiliprotein complex. This chain is Phycocyanin PC645 beta subunit, found in Chroomonas sp. (strain CCMP270).